The primary structure comprises 398 residues: Protein CDKN2AIP homolog A (398 aa).

The XRN2-binding (XTBD) domain occupies 19 to 124; sequence LELVHGECES…KVKKRGISSS (106 aa). The segment at 118–245 is disordered; that stretch reads KRGISSSNEG…SDNALKPTRR (128 aa). Residues 131–147 show a composition bias toward basic and acidic residues; the sequence is EPCKKQKSSDHGERESS. Composition is skewed to polar residues over residues 154–163, 189–199, and 226–238; these read SDGNVPSTSL, RRSLPVSNAKS, and QTSMKGPAQSSDN.

This sequence belongs to the CARF family.

Its subcellular location is the nucleus. It is found in the nucleoplasm. In terms of biological role, may regulate DNA damage response and cell proliferation. The protein is Protein CDKN2AIP homolog A (cdkn2aip-a) of Xenopus laevis (African clawed frog).